The chain runs to 78 residues: MEQAPEDQGPQREPHNEWTLELLEELKNEAVRHFPRIWLHGLGQHIYETYGDTWAGVEAIIRILQQLLFIHFQNWVST.

Residues 1-42 (MEQAPEDQGPQREPHNEWTLELLEELKNEAVRHFPRIWLHGL) form a homooligomerization region.

The protein belongs to the HIV-1 VPR protein family. Homooligomer, may form homodimer. Interacts with p6-gag region of the Pr55 Gag precursor protein through a (Leu-X-X)4 motif near the C-terminus of the P6gag protein. Interacts with host UNG. May interact with host RAD23A/HHR23A. Interacts with host VPRBP/DCAF1, leading to hijack the CUL4A-RBX1-DDB1-DCAF1/VPRBP complex, mediating ubiquitination of host proteins such as TERT and ZGPAT and arrest of the cell cycle in G2 phase. Phosphorylated on several residues by host. These phosphorylations regulate VPR activity for the nuclear import of the HIV-1 pre-integration complex.

It is found in the virion. It localises to the host nucleus. Its subcellular location is the host extracellular space. Functionally, during virus replication, may deplete host UNG protein, and incude G2-M cell cycle arrest. Acts by targeting specific host proteins for degradation by the 26S proteasome, through association with the cellular CUL4A-DDB1 E3 ligase complex by direct interaction with host VPRPB/DCAF-1. Cell cycle arrest reportedly occurs within hours of infection and is not blocked by antiviral agents, suggesting that it is initiated by the VPR carried into the virion. Additionally, VPR induces apoptosis in a cell cycle dependent manner suggesting that these two effects are mechanistically linked. Detected in the serum and cerebrospinal fluid of AIDS patient, VPR may also induce cell death to bystander cells. During virus entry, plays a role in the transport of the viral pre-integration (PIC) complex to the host nucleus. This function is crucial for viral infection of non-dividing macrophages. May act directly at the nuclear pore complex, by binding nucleoporins phenylalanine-glycine (FG)-repeat regions. This Human immunodeficiency virus type 1 group M subtype B (isolate PCV12) (HIV-1) protein is Protein Vpr.